Reading from the N-terminus, the 518-residue chain is Probable lysine--tRNA ligase, cytoplasmic (518 aa).

Belongs to the class-II aminoacyl-tRNA synthetase family. Homodimer.

The protein resides in the cytoplasm. The enzyme catalyses tRNA(Lys) + L-lysine + ATP = L-lysyl-tRNA(Lys) + AMP + diphosphate. In Enterocytozoon bieneusi (strain H348) (Microsporidian parasite), this protein is Probable lysine--tRNA ligase, cytoplasmic.